A 630-amino-acid polypeptide reads, in one-letter code: Sodium-dependent serotonin transporter (630 aa).

The Cytoplasmic portion of the chain corresponds to 1–87 (METTPLNSQK…ERETWGKKMD (87 aa)). The interval 23 to 60 (ENGVLQKGVPTTADRAEPSQISNGYSAVPSTSAGDEAS) is disordered. Residues 41 to 55 (SQISNGYSAVPSTSA) show a composition bias toward polar residues. Y47 is subject to Phosphotyrosine. The helical transmembrane segment at 88–112 (FLLSVIGYAVDLGNIWRFPYICYQN) threads the bilayer. G94, A96, V97, D98, and N101 together coordinate Na(+). Position 98 (D98) interacts with serotonin. Residues 113–115 (GGG) are Extracellular-facing. The chain crosses the membrane as a helical span at residues 116–135 (AFLLPYTIMAIFGGIPLFYM). Topologically, residues 136–160 (ELALGQYHRNGCISIWRKICPIFKG) are cytoplasmic. The residue at position 142 (Y142) is a Phosphotyrosine. The helical transmembrane segment at 161–186 (IGYAICIIAFYIASYYNTIIAWALYY) threads the bilayer. Over 187-252 (LISSLTDRLP…KGLQDLGTIS (66 aa)) the chain is Extracellular. C200 and C209 are disulfide-bonded. N-linked (GlcNAc...) asparagine glycans are attached at residues N208 and N217. Residues 253-271 (WQLTLCIVLIFTVIYFSIW) form a helical membrane-spanning segment. Residues 272–277 (KGVKTS) are Cytoplasmic-facing. The residue at position 276 (T276) is a Phosphothreonine. Residues 278-297 (GKVVWVTATFPYIVLSVLLV) form a helical membrane-spanning segment. At 298–324 (RGATLPGAWRGVVFYLKPNWQKLLETG) the chain is on the extracellular side. The chain crosses the membrane as a helical span at residues 325–347 (VWVDAAAQIFFSLGPGFGVLLAF). S336 contributes to the Na(+) binding site. Topologically, residues 348–360 (ASYNKFNNNCYQD) are cytoplasmic. Residues 361-380 (ALVTSVVNCMTSFVSGFVIF) traverse the membrane as a helical segment. N368 provides a ligand contact to Na(+). Over 381–421 (TVLGYMAEMRNEDVSEVAKDAGPSLLFITYAEAIANMPAST) the chain is Extracellular. A helical transmembrane segment spans residues 422–443 (FFAIIFFLMLITLGLDSTFAGL). 3 residues coordinate Na(+): L434, D437, and S438. Position 439 (T439) interacts with serotonin. Residues 444–463 (EGVITAVLDEFPHIWAKRRE) lie on the Cytoplasmic side of the membrane. The chain crosses the membrane as a helical span at residues 464–483 (WFVLIVVITCVLGSLLTLTS). The Extracellular segment spans residues 484 to 494 (GGAYVVTLLEE). 2 residues coordinate serotonin: E494 and Y495. A helical membrane pass occupies residues 495–516 (YATGPAVLTVALIEAVAVSWFY). The Cytoplasmic segment spans residues 517 to 538 (GITQFCSDVKEMLGFSPGWFWR). A helical membrane pass occupies residues 539 to 558 (ICWVAISPLFLLFIICSFLM). The serotonin site is built by F556 and S559. Residues 559–574 (SPPQLRLFQYNYPHWS) lie on the Extracellular side of the membrane. Residues 575–595 (IVLGYCIGMSSVICIPTYIIY) traverse the membrane as a helical segment. Over 596–630 (RLISTPGTLKERIIKSITPETPTEIPCGDIRMNAV) the chain is Cytoplasmic. The segment at 616 to 624 (TPTEIPCGD) is interaction with RAB4A.

The protein belongs to the sodium:neurotransmitter symporter (SNF) (TC 2.A.22) family. SLC6A4 subfamily. In terms of assembly, monomer or homooligomer. Interacts with TGFB1I1. Interacts with SEC23A, SEC24C and PATJ. Interacts with NOS1; the interaction may diminish the cell surface localization of SERT in the brain and, correspondingly, reduce serotonin reuptake. Interacts (via C-terminus) with SCAMP2; the interaction is direct and retains transporter molecules intracellularly. Interacts with filamentous actin and STX1A. Interacts (via the N-terminus) with STX1A (via the H3 domain); this interaction regulates SLC4A6 channel conductance. Interacts with ITGAV:ITGB3. Interacts (via C-terminus) with ITGB3; this interaction regulates SLC6A4 trafficking. Phosphorylation at Thr-276 increases 5-HT uptake and is required for cGMP-mediated SERT regulation. As to expression, expressed in the intestinal crypt epithelial cells and myenteric neurons of the small intestine (at protein level). Expressed in the brain.

The protein localises to the cell membrane. Its subcellular location is the endomembrane system. It localises to the endosome membrane. The protein resides in the synapse. It is found in the cell junction. The protein localises to the focal adhesion. Its subcellular location is the cell projection. It localises to the neuron projection. The enzyme catalyses serotonin(out) + K(+)(in) + Na(+)(out) + H(+)(in) = serotonin(in) + K(+)(out) + Na(+)(in) + H(+)(out). Serotonin transporter that cotransports serotonin with one Na(+) ion in exchange for one K(+) ion and possibly one proton in an overall electroneutral transport cycle. Transports serotonin across the plasma membrane from the extracellular compartment to the cytosol thus limiting serotonin intercellular signaling. Essential for serotonin homeostasis in the central nervous system. In the developing somatosensory cortex, acts in glutamatergic neurons to control serotonin uptake and its trophic functions accounting for proper spatial organization of cortical neurons and elaboration of sensory circuits. In the mature cortex, acts primarily in brainstem raphe neurons to mediate serotonin uptake from the synaptic cleft back into the pre-synaptic terminal thus terminating serotonin signaling at the synapse. Modulates mucosal serotonin levels in the gastrointestinal tract through uptake and clearance of serotonin in enterocytes. Required for enteric neurogenesis and gastrointestinal reflexes. Regulates blood serotonin levels by ensuring rapid high affinity uptake of serotonin from plasma to platelets, where it is further stored in dense granules via vesicular monoamine transporters and then released upon stimulation. Mechanistically, the transport cycle starts with an outward-open conformation having Na1(+) and Cl(-) sites occupied. The binding of a second extracellular Na2(+) ion and serotonin substrate leads to structural changes to outward-occluded to inward-occluded to inward-open, where the Na2(+) ion and serotonin are released into the cytosol. Binding of intracellular K(+) ion induces conformational transitions to inward-occluded to outward-open and completes the cycle by releasing K(+) possibly together with a proton bound to Asp-98 into the extracellular compartment. Na1(+) and Cl(-) ions remain bound throughout the transport cycle. Additionally, displays serotonin-induced channel-like conductance for monovalent cations, mainly Na(+) ions. The channel activity is uncoupled from the transport cycle and may contribute to the membrane resting potential or excitability. In Rattus norvegicus (Rat), this protein is Sodium-dependent serotonin transporter (Slc6a4).